The primary structure comprises 443 residues: Probable 26S proteasome regulatory subunit 4 (443 aa).

Positions 1 to 53 (MGQQQSGFGGRGNDRGAGDGEKKEKKKYEAPIPSRIGKKKKGSKGPDAASKLP) are disordered. The segment covering 12-29 (GNDRGAGDGEKKEKKKYE) has biased composition (basic and acidic residues). Residue 229–236 (GCPGTGKT) participates in ATP binding.

The protein belongs to the AAA ATPase family.

It is found in the cytoplasm. The protein localises to the nucleus. The 26S proteasome is involved in the ATP-dependent degradation of ubiquitinated proteins. The regulatory (or ATPase) complex confers ATP dependency and substrate specificity to the 26S complex. May play a role in the degradation of microtubule severing protein mei-1. The protein is Probable 26S proteasome regulatory subunit 4 (rpt-2) of Caenorhabditis elegans.